A 408-amino-acid chain; its full sequence is Peptidase T (408 aa).

Histidine 78 is a Zn(2+) binding site. The active site involves aspartate 80. Aspartate 140 is a Zn(2+) binding site. Glutamate 174 (proton acceptor) is an active-site residue. Glutamate 175, aspartate 197, and histidine 379 together coordinate Zn(2+).

The protein belongs to the peptidase M20B family. Zn(2+) is required as a cofactor.

Its subcellular location is the cytoplasm. The catalysed reaction is Release of the N-terminal residue from a tripeptide.. Cleaves the N-terminal amino acid of tripeptides. This is Peptidase T from Staphylococcus aureus (strain bovine RF122 / ET3-1).